A 704-amino-acid chain; its full sequence is Glycogen [starch] synthase, liver (704 aa).

Phosphoserine; by AMPK and PKA is present on Ser-8. Residue Ser-11 is modified to Phosphoserine. Lys-40 serves as a coordination point for UDP. UDP-alpha-D-glucose-binding residues include His-205 and Arg-211. Residues His-291, Glu-292, Gln-294, His-297, and Lys-301 each contribute to the alpha-D-glucose 6-phosphate site. Residue Arg-331 coordinates UDP. Arg-331 contacts UDP-alpha-D-glucose. His-501 lines the alpha-D-glucose 6-phosphate pocket. Residues Glu-510, Trp-512, and Gly-513 each coordinate UDP-alpha-D-glucose. Thr-515 lines the UDP pocket. Arg-582 and Arg-586 together coordinate alpha-D-glucose 6-phosphate. The segment at 620–704 (KFHLEPTSPP…KKKLHGEYKN (85 aa)) is disordered. Ser-627 bears the Phosphoserine mark. Phosphoserine; by GSK3-alpha and GSK3-beta occurs at positions 641, 645, 649, and 653. The span at 647–657 (SGSQASSPQCS) shows a compositional bias: low complexity. The residue at position 657 (Ser-657) is a Phosphoserine; by CK2. The segment covering 658–675 (DAEDEEDEDERYDEEEEA) has biased composition (acidic residues). At Ser-684 the chain carries Phosphoserine.

It belongs to the glycosyltransferase 3 family. In terms of assembly, part of the glycogen synthase (GS)-glycogenin complex, a heterooctamer composed of a tetramer of GS and 2 dimers of glycogenin, where each GS protomer binds to one glycogenin subunit (via glycogenin C-terminus); the GS tetramer may dissociate from glycogenin dimers to continue glycogen polymerization on its own. May also form a heterooctamer complex with GYG1 (via GYG1 C-terminus). Post-translationally, phosphorylation reduces the activity towards UDP-alpha-D-glucose. Primed phosphorylation at Ser-657 (site 5) by CSNK2A1 and CSNK2A2 is required for inhibitory phosphorylation at Ser-641 (site 3a), Ser-645 (site 3b), Ser-649 (site 3c) and Ser-653 (site 4) by GSK3A an GSK3B. Dephosphorylation at Ser-641 and Ser-645 by PP1 activates the enzyme. Phosphorylation at Ser-8 is not required for interaction with GYG1. Interaction with GYG1 does not regulate the phosphorylation at Ser-8 and Ser-641. Specifically expressed in liver.

It catalyses the reaction [(1-&gt;4)-alpha-D-glucosyl](n) + UDP-alpha-D-glucose = [(1-&gt;4)-alpha-D-glucosyl](n+1) + UDP + H(+). It participates in glycan biosynthesis; glycogen biosynthesis. Its activity is regulated as follows. Allosteric activation by glucose-6-phosphate. Phosphorylation reduces the activity towards UDP-glucose. When in the non-phosphorylated state, glycogen synthase does not require glucose-6-phosphate as an allosteric activator; when phosphorylated it does. Its function is as follows. Glycogen synthase participates in the glycogen biosynthetic process along with glycogenin and glycogen branching enzyme. Extends the primer composed of a few glucose units formed by glycogenin by adding new glucose units to it. In this context, glycogen synthase transfers the glycosyl residue from UDP-Glc to the non-reducing end of alpha-1,4-glucan. The protein is Glycogen [starch] synthase, liver of Mus musculus (Mouse).